Here is a 330-residue protein sequence, read N- to C-terminus: Ketol-acid reductoisomerase (NADP(+)) (330 aa).

The region spanning 2-181 is the KARI N-terminal Rossmann domain; sequence MEKYHETDAD…GATRAVVLET (180 aa). Residues 25–28, Arg48, Ser52, and 82–85 contribute to the NADP(+) site; these read YGSQ and DENQ. The active site involves His107. Gly133 serves as a coordination point for NADP(+). The region spanning 182–327 is the KARI C-terminal knotted domain; it reads TFREETETDL…SELRAMMPQF (146 aa). Mg(2+)-binding residues include Asp190, Glu194, Glu226, and Glu230. Residue Ser251 coordinates substrate.

This sequence belongs to the ketol-acid reductoisomerase family. Requires Mg(2+) as cofactor.

The enzyme catalyses (2R)-2,3-dihydroxy-3-methylbutanoate + NADP(+) = (2S)-2-acetolactate + NADPH + H(+). It catalyses the reaction (2R,3R)-2,3-dihydroxy-3-methylpentanoate + NADP(+) = (S)-2-ethyl-2-hydroxy-3-oxobutanoate + NADPH + H(+). Its pathway is amino-acid biosynthesis; L-isoleucine biosynthesis; L-isoleucine from 2-oxobutanoate: step 2/4. It functions in the pathway amino-acid biosynthesis; L-valine biosynthesis; L-valine from pyruvate: step 2/4. Its function is as follows. Involved in the biosynthesis of branched-chain amino acids (BCAA). Catalyzes an alkyl-migration followed by a ketol-acid reduction of (S)-2-acetolactate (S2AL) to yield (R)-2,3-dihydroxy-isovalerate. In the isomerase reaction, S2AL is rearranged via a Mg-dependent methyl migration to produce 3-hydroxy-3-methyl-2-ketobutyrate (HMKB). In the reductase reaction, this 2-ketoacid undergoes a metal-dependent reduction by NADPH to yield (R)-2,3-dihydroxy-isovalerate. In Methanocorpusculum labreanum (strain ATCC 43576 / DSM 4855 / Z), this protein is Ketol-acid reductoisomerase (NADP(+)).